The chain runs to 108 residues: Large ribosomal subunit protein eL36x (108 aa).

Disordered regions lie at residues 13–34 and 75–108; these read GHVV…KTSK and KLGT…EKKK. Residues 75-84 are compositionally biased toward basic residues; sequence KLGTHKRAKR.

The protein belongs to the eukaryotic ribosomal protein eL36 family.

This is Large ribosomal subunit protein eL36x (RPL36C) from Arabidopsis thaliana (Mouse-ear cress).